We begin with the raw amino-acid sequence, 243 residues long: 2-C-methyl-D-erythritol 4-phosphate cytidylyltransferase (243 aa).

The protein belongs to the IspD/TarI cytidylyltransferase family. IspD subfamily.

It catalyses the reaction 2-C-methyl-D-erythritol 4-phosphate + CTP + H(+) = 4-CDP-2-C-methyl-D-erythritol + diphosphate. The protein operates within isoprenoid biosynthesis; isopentenyl diphosphate biosynthesis via DXP pathway; isopentenyl diphosphate from 1-deoxy-D-xylulose 5-phosphate: step 2/6. Its function is as follows. Catalyzes the formation of 4-diphosphocytidyl-2-C-methyl-D-erythritol from CTP and 2-C-methyl-D-erythritol 4-phosphate (MEP). The polypeptide is 2-C-methyl-D-erythritol 4-phosphate cytidylyltransferase (Chlorobium phaeovibrioides (strain DSM 265 / 1930) (Prosthecochloris vibrioformis (strain DSM 265))).